Consider the following 178-residue polypeptide: Ribosomal RNA small subunit methyltransferase G (178 aa).

S-adenosyl-L-methionine contacts are provided by residues G54, L59, 105–106 (LE), and R120.

It belongs to the methyltransferase superfamily. RNA methyltransferase RsmG family.

The protein localises to the cytoplasm. It carries out the reaction guanosine(527) in 16S rRNA + S-adenosyl-L-methionine = N(7)-methylguanosine(527) in 16S rRNA + S-adenosyl-L-homocysteine. Specifically methylates the N7 position of guanine in position 527 of 16S rRNA. In Helicobacter pylori (strain J99 / ATCC 700824) (Campylobacter pylori J99), this protein is Ribosomal RNA small subunit methyltransferase G.